Consider the following 184-residue polypeptide: UPF0397 protein SA2477 (184 aa).

The next 5 membrane-spanning stretches (helical) occupy residues 11-31, 44-64, 77-97, 111-131, and 148-168; these read VVAIGIGAAVFVILGRFVVIP, AFLALISAIFGPFAGLMTGLV, AWWSWVICSGIIGCLYGWIGL, MIYFNIGQIIANIICWALIAP, and QGVISAVLNIISVGIIGTILL.

Belongs to the UPF0397 family.

It localises to the cell membrane. In Staphylococcus aureus (strain N315), this protein is UPF0397 protein SA2477.